Here is a 415-residue protein sequence, read N- to C-terminus: Probable glucuronosyltransferase Os03g0287800 (415 aa).

The Cytoplasmic segment spans residues 1–25 (MGSSTDHGGAGGRGKKGSGSQLWKK). A helical; Signal-anchor for type II membrane protein membrane pass occupies residues 26-43 (ALLHSSLCFVMGFFTGFA). The Lumenal portion of the chain corresponds to 44–415 (PSSVSDWTSA…GGRFLSGDFC (372 aa)). Residues N78, N165, N257, and N287 are each glycosylated (N-linked (GlcNAc...) asparagine).

Belongs to the glycosyltransferase 43 family.

Its subcellular location is the golgi apparatus membrane. Functionally, involved in the synthesis of glucuronoxylan hemicellulose in secondary cell walls. This Oryza sativa subsp. japonica (Rice) protein is Probable glucuronosyltransferase Os03g0287800.